The chain runs to 1157 residues: Nitric oxide synthase, inducible (1157 aa).

The DINNN-motif; mediates interaction with SPSB1, SPSB2 and SPSB4 signature appears at 23–27 (DINNN). Residues 29–64 (EKLRQASSSPVTQDDPKCPSRSRHRNECSQPLAETA) form a disordered region. The Zn(2+) site is built by Cys110 and Cys115. Cys200 lines the heme b pocket. Positions 263, 372, 373, and 377 each coordinate L-arginine. (6R)-L-erythro-5,6,7,8-tetrahydrobiopterin-binding residues include Arg381, Ile462, Trp463, and Phe476. Tyr491 is a binding site for heme b. The tract at residues 515–535 (FKVLVKAVLFAAVLMHKTMAA) is calmodulin-binding. A Flavodoxin-like domain is found at 539 to 677 (ATILFATETG…AFRGWAVQTF (139 aa)). Thr545, Glu546, Thr547, Arg549, Ser550, Ser591, Thr592, Ser628, Cys635, Glu661, and Gln665 together coordinate FMN. One can recognise an FAD-binding FR-type domain in the interval 730–970 (KYVFSMRLKS…VRSASGFQLP (241 aa)). Arg750 is a binding site for NADP(+). Residues His772, Arg906, Tyr908, Ser909, Thr924, and Ala926 each coordinate FAD. Residue Thr929 coordinates NADP(+). The FAD site is built by Tyr930, Val943, Cys944, and Ser945. NADP(+) contacts are provided by Thr984, Arg1017, Ser1046, Arg1047, Lys1053, Tyr1055, Gln1057, and Asp1090. Residues 1138-1157 (KEGAVGPPSDPRAPGAHGKS) form a disordered region.

This sequence belongs to the NOS family. As to quaternary structure, homodimer. Interacts with NHERF1. Interacts with GAPDH; induced by oxidatively-modified low-densitity lipoprotein (LDL(ox)). Interacts with S100A8 and S100A9 to form the iNOS-S100A8/9 transnitrosylase complex. Interacts with SPSB1, SPSB2 and SPSB4. Interacts with ELOC and CUL5 in the presence of SPSB1 or SPSB2 or SPSB4. Forms a complex with ASL, ASS1 and HSP90AA1; the complex regulates cell-autonomous L-arginine synthesis and citrulline recycling while channeling extracellular L-arginine to nitric oxide synthesis pathway. Heme b serves as cofactor. FAD is required as a cofactor. It depends on FMN as a cofactor. Requires (6R)-L-erythro-5,6,7,8-tetrahydrobiopterin as cofactor. Polyubiquitinated; mediated by SPSB1, SPSB2 and SPSB4, leading to proteasomal degradation. As to expression, detected in both stimulated and unstimulated immune cells and macrophages with little or no up-regulation following cellular stimulation with lipopolysaccharides (LPS) or concanavalin A (ConA).

The protein resides in the cytoplasm. It is found in the cytosol. It catalyses the reaction 2 L-arginine + 3 NADPH + 4 O2 + H(+) = 2 L-citrulline + 2 nitric oxide + 3 NADP(+) + 4 H2O. Not stimulated by calcium/calmodulin. Its function is as follows. Produces nitric oxide (NO) which is a messenger molecule with diverse functions throughout the body. In macrophages, NO mediates tumoricidal and bactericidal actions. Also has nitrosylase activity and mediates cysteine S-nitrosylation of cytoplasmic target proteins such PTGS2/COX2. As component of the iNOS-S100A8/9 transnitrosylase complex involved in the selective inflammatory stimulus-dependent S-nitrosylation of GAPDH implicated in regulation of the GAIT complex activity and probably multiple targets including ANXA5, EZR, MSN and VIM. Involved in inflammation, enhances the synthesis of pro-inflammatory mediators such as IL6 and IL8. This chain is Nitric oxide synthase, inducible (NOS2), found in Sus scrofa (Pig).